Consider the following 524-residue polypeptide: 2-isopropylmalate synthase (524 aa).

In terms of domain architecture, Pyruvate carboxyltransferase spans 5–267 (VIIFDTTLRD…HTNINHQEIF (263 aa)). D14, H202, H204, and N238 together coordinate Mn(2+). Residues 392–524 (SLDYFSVQSG…SKHQNNQETV (133 aa)) are regulatory domain.

The protein belongs to the alpha-IPM synthase/homocitrate synthase family. LeuA type 1 subfamily. As to quaternary structure, homodimer. Mn(2+) serves as cofactor.

The protein resides in the cytoplasm. The enzyme catalyses 3-methyl-2-oxobutanoate + acetyl-CoA + H2O = (2S)-2-isopropylmalate + CoA + H(+). It functions in the pathway amino-acid biosynthesis; L-leucine biosynthesis; L-leucine from 3-methyl-2-oxobutanoate: step 1/4. Catalyzes the condensation of the acetyl group of acetyl-CoA with 3-methyl-2-oxobutanoate (2-ketoisovalerate) to form 3-carboxy-3-hydroxy-4-methylpentanoate (2-isopropylmalate). This is 2-isopropylmalate synthase from Serratia proteamaculans (strain 568).